Reading from the N-terminus, the 382-residue chain is DnaJ homolog dnj-20 (382 aa).

The first 21 residues, 1–21 (MRILNVSLLVLTAFLVDFVEC), serve as a signal peptide directing secretion. The J domain occupies 24-89 (DFYKILGVSK…EKRAMYDRHG (66 aa)).

The sequence is that of DnaJ homolog dnj-20 from Caenorhabditis briggsae.